A 210-amino-acid chain; its full sequence is Outer-membrane lipoprotein LolB (210 aa).

Positions 1 to 26 are cleaved as a signal peptide; it reads MSKLKIDTKRRFSLLIALVLIISLSS. Residue cysteine 27 is the site of N-palmitoyl cysteine attachment. Residue cysteine 27 is the site of S-diacylglycerol cysteine attachment.

It belongs to the LolB family. In terms of assembly, monomer.

It localises to the cell outer membrane. Its function is as follows. Plays a critical role in the incorporation of lipoproteins in the outer membrane after they are released by the LolA protein. The chain is Outer-membrane lipoprotein LolB from Francisella tularensis subsp. novicida (strain U112).